The sequence spans 460 residues: Elongation factor 1-alpha (460 aa).

Glycine 2 carries the n,N,N-trimethylglycine modification. Lysine 3 carries the N6,N6-dimethyllysine; alternate modification. Lysine 3 is subject to N6-methyllysine; alternate. The 236-residue stretch at 5 to 240 (KLHVNVVVIG…DAIEPPVRPS (236 aa)) folds into the tr-type G domain. The interval 14–21 (GHVDSGKS) is G1. Position 14-21 (14-21 (GHVDSGKS)) interacts with GTP. Residue lysine 30 is modified to N6-methyllysine. The segment at 70–74 (GITID) is G2. The residue at position 79 (lysine 79) is an N6,N6,N6-trimethyllysine. The tract at residues 91–94 (DAPG) is G3. GTP is bound by residues 91–95 (DAPGH) and 153–156 (NKMD). Residues 153-156 (NKMD) are G4. The interval 192–194 (SGW) is G5. Lysine 316 carries the post-translational modification N6,N6-dimethyllysine; alternate. At lysine 316 the chain carries N6-methyllysine; alternate. N6-methyllysine is present on lysine 390.

It belongs to the TRAFAC class translation factor GTPase superfamily. Classic translation factor GTPase family. EF-Tu/EF-1A subfamily.

The protein resides in the cytoplasm. In terms of biological role, this protein promotes the GTP-dependent binding of aminoacyl-tRNA to the A-site of ribosomes during protein biosynthesis. This Schizophyllum commune (Split gill fungus) protein is Elongation factor 1-alpha (TEF1).